A 434-amino-acid polypeptide reads, in one-letter code: Bifunctional protein GlmU (434 aa).

Positions 1 to 226 (MNKNKISIVI…ENEYKGVNSK (226 aa)) are pyrophosphorylase. Residues 11–14 (LAAG), lysine 25, glutamine 77, and 84–85 (GT) contribute to the UDP-N-acetyl-alpha-D-glucosamine site. Residue aspartate 105 participates in Mg(2+) binding. The UDP-N-acetyl-alpha-D-glucosamine site is built by glycine 138, glutamate 152, asparagine 167, and asparagine 224. Residue asparagine 224 coordinates Mg(2+). The interval 227–247 (KDLSDAEIIMQDKIKNSLMES) is linker. The tract at residues 248–434 (GVTMQLPSTI…DFYYKFFAKK (187 aa)) is N-acetyltransferase. Residues arginine 311 and lysine 328 each coordinate UDP-N-acetyl-alpha-D-glucosamine. The Proton acceptor role is filled by histidine 339. Positions 342 and 353 each coordinate UDP-N-acetyl-alpha-D-glucosamine. Acetyl-CoA is bound by residues alanine 356, 362–363 (NY), serine 381, and alanine 399.

This sequence in the N-terminal section; belongs to the N-acetylglucosamine-1-phosphate uridyltransferase family. It in the C-terminal section; belongs to the transferase hexapeptide repeat family. In terms of assembly, homotrimer. The cofactor is Mg(2+).

The protein resides in the cytoplasm. It catalyses the reaction alpha-D-glucosamine 1-phosphate + acetyl-CoA = N-acetyl-alpha-D-glucosamine 1-phosphate + CoA + H(+). It carries out the reaction N-acetyl-alpha-D-glucosamine 1-phosphate + UTP + H(+) = UDP-N-acetyl-alpha-D-glucosamine + diphosphate. It participates in nucleotide-sugar biosynthesis; UDP-N-acetyl-alpha-D-glucosamine biosynthesis; N-acetyl-alpha-D-glucosamine 1-phosphate from alpha-D-glucosamine 6-phosphate (route II): step 2/2. It functions in the pathway nucleotide-sugar biosynthesis; UDP-N-acetyl-alpha-D-glucosamine biosynthesis; UDP-N-acetyl-alpha-D-glucosamine from N-acetyl-alpha-D-glucosamine 1-phosphate: step 1/1. The protein operates within bacterial outer membrane biogenesis; LPS lipid A biosynthesis. Functionally, catalyzes the last two sequential reactions in the de novo biosynthetic pathway for UDP-N-acetylglucosamine (UDP-GlcNAc). The C-terminal domain catalyzes the transfer of acetyl group from acetyl coenzyme A to glucosamine-1-phosphate (GlcN-1-P) to produce N-acetylglucosamine-1-phosphate (GlcNAc-1-P), which is converted into UDP-GlcNAc by the transfer of uridine 5-monophosphate (from uridine 5-triphosphate), a reaction catalyzed by the N-terminal domain. The polypeptide is Bifunctional protein GlmU (Sulfurimonas denitrificans (strain ATCC 33889 / DSM 1251) (Thiomicrospira denitrificans (strain ATCC 33889 / DSM 1251))).